We begin with the raw amino-acid sequence, 271 residues long: tRNA (guanine-N(1)-)-methyltransferase (271 aa).

Residues Gly-120 and 145–150 (IGDYVL) contribute to the S-adenosyl-L-methionine site.

The protein belongs to the RNA methyltransferase TrmD family. Homodimer.

It is found in the cytoplasm. It carries out the reaction guanosine(37) in tRNA + S-adenosyl-L-methionine = N(1)-methylguanosine(37) in tRNA + S-adenosyl-L-homocysteine + H(+). In terms of biological role, specifically methylates guanosine-37 in various tRNAs. The protein is tRNA (guanine-N(1)-)-methyltransferase of Bifidobacterium longum (strain NCC 2705).